Here is a 107-residue protein sequence, read N- to C-terminus: Cytochrome c2 (107 aa).

Q1 bears the Pyrrolidone carboxylic acid mark. Residues C13, C16, H17, and M79 each contribute to the heme c site.

The protein belongs to the cytochrome c family. In terms of processing, binds 1 heme c group covalently per subunit.

It localises to the periplasm. In terms of biological role, cytochrome c2 is found mainly in purple, non-sulfur, photosynthetic bacteria where it functions as the electron donor to the oxidized bacteriochlorophyll in the photophosphorylation pathway. However, it may also have a role in the respiratory chain and is found in some non-photosynthetic bacteria. The chain is Cytochrome c2 from Rhodoplanes tepidamans (Rhodoplanes cryptolactis).